We begin with the raw amino-acid sequence, 45 residues long: RDCTSQSHKFVGLCLSDRNCASVCLTEYFTGGKCDHRRCVCTKGC.

Intrachain disulfides connect C3-C45, C14-C34, C20-C39, and C24-C41.

Its function is as follows. Plant defense peptide. This chain is Defensin Tk-AMP-D4, found in Triticum kiharae (Wheat).